A 565-amino-acid polypeptide reads, in one-letter code: Zinc finger protein 512 (565 aa).

Residues 1-30 (MSSRLGAVPATSGPTTFKQQRSTRIVGAKN) are disordered. Positions 12-23 (SGPTTFKQQRST) are enriched in polar residues. Residues Lys18 and Lys83 each participate in a glycyl lysine isopeptide (Lys-Gly) (interchain with G-Cter in SUMO2) cross-link. A disordered region spans residues 85–147 (AATSHVEGSG…QARRIRKEPP (63 aa)). Over residues 118 to 129 (KKHKLYGRKQRP) the composition is skewed to basic residues. The C2H2-type 1 zinc-finger motif lies at 196 to 219 (FTCHHCGKQLRSLAGMKYHVMANH). Lys226 is covalently cross-linked (Glycyl lysine isopeptide (Lys-Gly) (interchain with G-Cter in SUMO2)). Residues 286 to 309 (LKCHHCGKPYRSKAGLAYHLRSEH) form a C2H2-type 2 zinc finger. Lys332 is covalently cross-linked (Glycyl lysine isopeptide (Lys-Gly) (interchain with G-Cter in SUMO2)). Residues 405 to 429 (IQCPNQGCEAVYSSVSGLKAHLGSC) form a C2H2-type 3; atypical zinc finger. A C2H2-type 4 zinc finger spans residues 439 to 462 (YKCLLCQKEFVSESGVKYHINSVH). Residues 484–493 (KQRQQEEEKR) show a composition bias toward basic and acidic residues. The segment at 484 to 565 (KQRQQEEEKR…PKTNHKRGRK (82 aa)) is disordered. Residues 494 to 507 (RQQHRSRRSLRRRQ) are compositionally biased toward basic residues. Basic and acidic residues predominate over residues 522 to 531 (VGKDQRRNEE). The span at 554 to 565 (KPPKTNHKRGRK) shows a compositional bias: basic residues.

It belongs to the krueppel C2H2-type zinc-finger protein family.

It is found in the nucleus. Its function is as follows. May be involved in transcriptional regulation. The protein is Zinc finger protein 512 (ZNF512) of Macaca fascicularis (Crab-eating macaque).